Consider the following 530-residue polypeptide: Sulfate adenylyltransferase (530 aa).

Positions 1-178 (MPIPAPHGGK…IQGLDYPTHY (178 aa)) are N-terminal. The tract at residues 179–410 (DYIPFRKTPT…LRESNPPRSK (232 aa)) is catalytic. Q208 is a binding site for sulfate. ATP is bound by residues 208 to 211 (QTRN) and 304 to 307 (GRDH). Catalysis depends on residues T209, R210, and N211. A sulfate-binding site is contributed by R210. A308 contributes to the sulfate binding site. An ATP-binding site is contributed by V348. Residues 411 to 530 (QGFAIVIDSS…LVSQGFYQQS (120 aa)) are required for oligomerization; adenylyl-sulfate kinase-like.

It belongs to the sulfate adenylyltransferase family. Homohexamer. Dimer of trimers.

The protein localises to the cytoplasm. The enzyme catalyses sulfate + ATP + H(+) = adenosine 5'-phosphosulfate + diphosphate. It functions in the pathway sulfur metabolism; hydrogen sulfide biosynthesis; sulfite from sulfate: step 1/3. Its function is as follows. Catalyzes the first intracellular reaction of sulfate assimilation, forming adenosine-5'-phosphosulfate (APS) from inorganic sulfate and ATP. Plays an important role in sulfate activation as a component of the biosynthesis pathway of sulfur-containing amino acids. This Debaryomyces hansenii (strain ATCC 36239 / CBS 767 / BCRC 21394 / JCM 1990 / NBRC 0083 / IGC 2968) (Yeast) protein is Sulfate adenylyltransferase.